The chain runs to 223 residues: MAISASAGAAPVITIDGPTASGKGTIAHRVAKQLGWDVLDSGALYRLTALAALRRGLPATDEPAVAAVAQALDVRFDGPHVYLEGRDAGHEIRQEEVGNYASRIAAYPGVRQALLERQRAFRQPPGLVADGRDMGTVVFPDASLKIFLVADVEARAQRRCKQLIEKGISANLDDLLRDMRERDARDTQRAVAPLAPAADAHVLDSSGLTIEQTVQAVLDFWRA.

17 to 25 (GPTASGKGT) serves as a coordination point for ATP.

This sequence belongs to the cytidylate kinase family. Type 1 subfamily.

Its subcellular location is the cytoplasm. It carries out the reaction CMP + ATP = CDP + ADP. The enzyme catalyses dCMP + ATP = dCDP + ADP. This Bordetella bronchiseptica (strain ATCC BAA-588 / NCTC 13252 / RB50) (Alcaligenes bronchisepticus) protein is Cytidylate kinase.